We begin with the raw amino-acid sequence, 215 residues long: NAD(P)H-hydrate epimerase (215 aa).

The YjeF N-terminal domain maps to 10 to 211; sequence AQRYDAHATN…DIGIYAQDRV (202 aa). 58 to 62 contributes to the (6S)-NADPHX binding site; sequence NNGGD. 2 residues coordinate K(+): N59 and D121. (6S)-NADPHX is bound by residues 125–131 and D154; that span reads GVGLTRD. Position 157 (S157) interacts with K(+).

Belongs to the NnrE/AIBP family. Requires K(+) as cofactor.

The enzyme catalyses (6R)-NADHX = (6S)-NADHX. It catalyses the reaction (6R)-NADPHX = (6S)-NADPHX. Functionally, catalyzes the epimerization of the S- and R-forms of NAD(P)HX, a damaged form of NAD(P)H that is a result of enzymatic or heat-dependent hydration. This is a prerequisite for the S-specific NAD(P)H-hydrate dehydratase to allow the repair of both epimers of NAD(P)HX. The sequence is that of NAD(P)H-hydrate epimerase from Levilactobacillus brevis (strain ATCC 367 / BCRC 12310 / CIP 105137 / JCM 1170 / LMG 11437 / NCIMB 947 / NCTC 947) (Lactobacillus brevis).